We begin with the raw amino-acid sequence, 256 residues long: Thiazole synthase (256 aa).

The active-site Schiff-base intermediate with DXP is the Lys95. Residues Gly156, 182–183 (AG), and 204–205 (NT) contribute to the 1-deoxy-D-xylulose 5-phosphate site.

The protein belongs to the ThiG family. Homotetramer. Forms heterodimers with either ThiH or ThiS.

Its subcellular location is the cytoplasm. It catalyses the reaction [ThiS sulfur-carrier protein]-C-terminal-Gly-aminoethanethioate + 2-iminoacetate + 1-deoxy-D-xylulose 5-phosphate = [ThiS sulfur-carrier protein]-C-terminal Gly-Gly + 2-[(2R,5Z)-2-carboxy-4-methylthiazol-5(2H)-ylidene]ethyl phosphate + 2 H2O + H(+). It functions in the pathway cofactor biosynthesis; thiamine diphosphate biosynthesis. Catalyzes the rearrangement of 1-deoxy-D-xylulose 5-phosphate (DXP) to produce the thiazole phosphate moiety of thiamine. Sulfur is provided by the thiocarboxylate moiety of the carrier protein ThiS. In vitro, sulfur can be provided by H(2)S. The polypeptide is Thiazole synthase (Salmonella agona (strain SL483)).